A 371-amino-acid chain; its full sequence is DNA replication and repair protein RecF (371 aa).

30–37 is a binding site for ATP; it reads GENAQGKT.

It belongs to the RecF family.

Its subcellular location is the cytoplasm. Its function is as follows. The RecF protein is involved in DNA metabolism; it is required for DNA replication and normal SOS inducibility. RecF binds preferentially to single-stranded, linear DNA. It also seems to bind ATP. The protein is DNA replication and repair protein RecF of Staphylococcus haemolyticus (strain JCSC1435).